We begin with the raw amino-acid sequence, 64 residues long: Large ribosomal subunit protein bL35 (64 aa).

The protein belongs to the bacterial ribosomal protein bL35 family.

This Helicobacter hepaticus (strain ATCC 51449 / 3B1) protein is Large ribosomal subunit protein bL35.